A 141-amino-acid chain; its full sequence is Galactose-6-phosphate isomerase subunit LacA (141 aa).

Belongs to the LacAB/RpiB family. Heteromultimeric protein consisting of LacA and LacB.

The catalysed reaction is aldehydo-D-galactose 6-phosphate = keto-D-tagatose 6-phosphate. It functions in the pathway carbohydrate metabolism; D-galactose 6-phosphate degradation; D-tagatose 6-phosphate from D-galactose 6-phosphate: step 1/1. This is Galactose-6-phosphate isomerase subunit LacA from Streptococcus pneumoniae serotype 4 (strain ATCC BAA-334 / TIGR4).